Consider the following 586-residue polypeptide: Putative butyrophilin subfamily 2 member A3 (586 aa).

Residues 1–27 form the signal peptide; the sequence is MEPAAALHFSRPASLLLLLSLCALVSA. Positions 28–139 constitute an Ig-like V-type domain; the sequence is QVTVVGPTDP…SCNEAILHLV (112 aa). Topologically, residues 28–246 are extracellular; the sequence is QVTVVGPTDP…SFMPSRSPCV (219 aa). Asn-45, Asn-112, Asn-214, and Asn-220 each carry an N-linked (GlcNAc...) asparagine glycan. Cys-50 and Cys-123 are oxidised to a cystine. Residues 247–267 traverse the membrane as a helical segment; it reads VILPVIMIILMIPIAICIYWI. At 268 to 586 the chain is on the cytoplasmic side; that stretch reads NNLQKEKKDS…VPQLPARKKV (319 aa). A B30.2/SPRY domain is found at 281 to 474; it reads TFNLCLSLAG…ILICSAFTGA (194 aa).

This sequence belongs to the immunoglobulin superfamily. BTN/MOG family.

The protein localises to the membrane. The polypeptide is Putative butyrophilin subfamily 2 member A3 (BTN2A3P) (Homo sapiens (Human)).